Consider the following 902-residue polypeptide: 4-hydroxyphenylacetate decarboxylase glycyl radical subunit (902 aa).

One can recognise a PFL domain in the interval 38 to 774 (KRAEDLLDVY…ATLATPDGRL (737 aa)). Positions 348 and 507 each coordinate 4-hydroxyphenylacetate. Catalysis depends on cysteine 507, which acts as the Cysteine radical intermediate. Catalysis depends on glutamate 509, which acts as the Proton donor. 4-hydroxyphenylacetate is bound by residues histidine 540 and glutamate 641. Residues 782–902 (GSVSAYAGTD…VIARTEYEGV (121 aa)) form the Glycine radical domain. Position 877 is a glycine radical (glycine 877).

This sequence belongs to the glycyl radical enzyme (GRE) family. HPAD subfamily. As to quaternary structure, heterooctamer consisting of 4 large (HpdB) subunits and 4 small (HpdC) subunits. Also forms a catalytically inactive homodimer. Phosphorylated on serine. Phosphorylation may trigger the formation of the active heterooctamers and thereby regulates enzyme activity. Post-translationally, requires the activating protein HpdA to generate the key active site glycyl radical that is involved in catalysis.

The enzyme catalyses 4-hydroxyphenylacetate + H(+) = 4-methylphenol + CO2. It carries out the reaction 3,4-dihydroxyphenylacetate + H(+) = 4-methylcatechol + CO2. It catalyses the reaction 2-hydroxy-2-(4-hydroxyphenyl)acetate + H(+) = 4-hydroxybenzyl alcohol + CO2. Enzyme activity catalyzed by the HPA decarboxylase complex is rapidly and irreversibly inactivated by oxygen. Competitively inhibited by p-hydroxyphenylacetamide. Not inhibited by m- or o-hydroxyphenyl-acetate, p-hydroxybenzoate or p-hydroxyphenylpropionate. Functionally, glycyl radical subunit of the HPA decarboxylase that decarboxylates phenylacetates with a hydroxyl group in the p-position. Active toward 4-hydroxyphenylacetate, 3,4-dihydroxyphenylacetate and to a lesser extent p-hydroxymandelate (2-hydroxy-2-(4-hydroxyphenyl)acetate), forming 4-methylphenol, 4-methylcatechol and 4-hydroxybenzylalcohol, respectively. Is likely involved in the catabolism of aromatic amino acids such as tyrosine fermentation. 4-methylphenol (p-cresol) formation provides metabolic toxicity, which may benefit the pathogen C.difficile by suppression of the endogenous gastrointestinal microflora, allowing the development of gastrointestinal infections. The large subunit is the catalytic subunit that binds the substrate. In Clostridioides difficile (Peptoclostridium difficile), this protein is 4-hydroxyphenylacetate decarboxylase glycyl radical subunit.